The primary structure comprises 62 residues: Statherin (62 aa).

The signal sequence occupies residues 1 to 19 (MKFLVFAFILALMVSMIGA). The segment at 20–25 (DSSEEK) is hydroxyapatite-binding; inhibits crystal growth. Phosphoserine occurs at positions 21 and 22. Positions 25 to 56 (KFLRRIGRFGYGYGPYQPVPEQPLYPQPYQPQ) form a cross-link, isoglutamyl lysine isopeptide (Lys-Gln); in form cyclo-statherin Q-37. The segment at residues 25-58 (KFLRRIGRFGYGYGPYQPVPEQPLYPQPYQPQYQ) is a cross-link (isoglutamyl lysine isopeptide (Lys-Gln); in form cyclo-statherin Q-39). The tract at residues 38–62 (GPYQPVPEQPLYPQPYQPQYQQYTF) is hydrophobic; inhibits precipitation of calcium phosphate salts.

This sequence belongs to the histatin/statherin family. Post-translationally, substrate for transglutaminase-2. More than 95% of the cyclized peptide is cyclo-statherin Q-37, and less than 5% is cyclo-statherin Q-39. Cyclized forms account for about 1% of total statherin in saliva. In terms of processing, sulfated on tyrosine residues. As to expression, secreted by parotid and submandibular glands.

It is found in the secreted. Salivary protein that stabilizes saliva supersaturated with calcium salts by inhibiting the precipitation of calcium phosphate salts. It also modulates hydroxyapatite crystal formation on the tooth surface. The polypeptide is Statherin (STATH) (Homo sapiens (Human)).